The primary structure comprises 299 residues: UDP-N-acetylenolpyruvoylglucosamine reductase (299 aa).

One can recognise an FAD-binding PCMH-type domain in the interval 28–193 (IGGPVDLMVL…VSALMQLHKE (166 aa)). R172 is an active-site residue. S222 serves as the catalytic Proton donor. E292 is a catalytic residue.

This sequence belongs to the MurB family. The cofactor is FAD.

The protein localises to the cytoplasm. It carries out the reaction UDP-N-acetyl-alpha-D-muramate + NADP(+) = UDP-N-acetyl-3-O-(1-carboxyvinyl)-alpha-D-glucosamine + NADPH + H(+). It functions in the pathway cell wall biogenesis; peptidoglycan biosynthesis. Its function is as follows. Cell wall formation. This Syntrophomonas wolfei subsp. wolfei (strain DSM 2245B / Goettingen) protein is UDP-N-acetylenolpyruvoylglucosamine reductase.